The primary structure comprises 115 residues: Probable 4-amino-4-deoxy-L-arabinose-phosphoundecaprenol flippase subunit ArnE (115 aa).

The next 3 membrane-spanning stretches (helical) occupy residues 42–62 (PWPWLALLALGLGLACWLLLL), 65–85 (VEVGSAYPMLALNFVLVTLVA), and 93–112 (VDRRHLAGLLLIVAGVALLG). In terms of domain architecture, EamA spans 46–113 (LALLALGLGL…IVAGVALLGR (68 aa)).

The protein belongs to the ArnE family. Heterodimer of ArnE and ArnF.

The protein resides in the cell inner membrane. Its pathway is bacterial outer membrane biogenesis; lipopolysaccharide biosynthesis. Translocates 4-amino-4-deoxy-L-arabinose-phosphoundecaprenol (alpha-L-Ara4N-phosphoundecaprenol) from the cytoplasmic to the periplasmic side of the inner membrane. The sequence is that of Probable 4-amino-4-deoxy-L-arabinose-phosphoundecaprenol flippase subunit ArnE from Pseudomonas paraeruginosa (strain DSM 24068 / PA7) (Pseudomonas aeruginosa (strain PA7)).